A 359-amino-acid polypeptide reads, in one-letter code: MAPMGIRLSPLGVAVFCLLGLGVLYHLYSGFLAGRFSLFGLGGEPGGGAAGPAAAADGGTVDLREMLAVSVLAAVRGGDEVRRVRESNVLHEKSKGKTREGAEDKMTSGDVLSNRKMFYLLKTAFPSVQINTEEHVDAADQEVILWDHKIPEDILKEVTTPKEVPAESVTVWIDPLDATQEYTEDLRKYVTTMVCVAVNGKPMLGVIHKPFSEYTAWAMVDGGSNVKARSSYNEKTPRIVVSRSHSGMVKQVALQTFGNQTTIIPAGGAGYKVLALLDVPDKSQEKADLYIHVTYIKKWDICAGNAILKALGGHMTTLSGEEISYTGSDGIEGGLLASIRMNHQALVRKLPDLEKTGHK.

An N-acetylmethionine modification is found at M1. Residues 1–12 lie on the Cytoplasmic side of the membrane; it reads MAPMGIRLSPLG. A helical membrane pass occupies residues 13–33; it reads VAVFCLLGLGVLYHLYSGFLA. Residues 34–359 lie on the Lumenal side of the membrane; sequence GRFSLFGLGG…LPDLEKTGHK (326 aa). Residues 86–106 form a disordered region; the sequence is ESNVLHEKSKGKTREGAEDKM. D110 acts as the Proton acceptor in catalysis. Residues E133, D174, L176, and D177 each contribute to the Mg(2+) site. T179 (proton acceptor) is an active-site residue. Residues S242 and H245 each coordinate AMP. Residue N259 is glycosylated (N-linked (GlcNAc...) asparagine). AMP contacts are provided by G268 and K272. Residue D300 participates in Mg(2+) binding.

The protein belongs to the inositol monophosphatase superfamily. It depends on Mg(2+) as a cofactor. In terms of processing, contains N-linked glycan resistant to endoglycosydase H.

The protein resides in the golgi apparatus. It localises to the trans-Golgi network membrane. The enzyme catalyses adenosine 3',5'-bisphosphate + H2O = AMP + phosphate. It functions in the pathway sulfur metabolism. Strongly inhibited by lithium. Functionally, exhibits 3'-nucleotidase activity toward adenosine 3',5'-bisphosphate (PAP), namely hydrolyzes adenosine 3',5'-bisphosphate into adenosine 5'-monophosphate (AMP) and a phosphate. May play a role in the formation of skeletal elements derived through endochondral ossification, possibly by clearing adenosine 3',5'-bisphosphate produced by Golgi sulfotransferases during glycosaminoglycan sulfation. Has no activity toward 3'-phosphoadenosine 5'-phosphosulfate (PAPS) or inositol phosphate (IP) substrates including I(1)P, I(1,4)P2, I(1,3,4)P3, I(1,4,5)P3 and I(1,3,4,5)P4. This chain is Golgi-resident adenosine 3',5'-bisphosphate 3'-phosphatase, found in Homo sapiens (Human).